The sequence spans 466 residues: Zinc finger protein ZIC 3 (466 aa).

The span at 65-80 (DLSSGQSSAFTPQGSG) shows a compositional bias: polar residues. Residues 65-103 (DLSSGQSSAFTPQGSGYANALGHHHHHHHHHHASQVPTY) are disordered. The segment covering 86–97 (GHHHHHHHHHHA) has biased composition (basic residues). Residue lysine 247 forms a Glycyl lysine isopeptide (Lys-Gly) (interchain with G-Cter in SUMO2) linkage. The C2H2-type 1; atypical zinc-finger motif lies at 250 to 285 (LSCKWIEEAQLSRPKKSCDRTFSTMHELVTHVTMEH). A C2H2-type 2; atypical zinc finger spans residues 294–321 (HVCYWEECPREGKSFKAKYKLVNHIRVH). 2 consecutive short sequence motifs (nuclear localization signal) follow at residues 296 to 321 (CYWE…IRVH) and 329 to 351 (CPFP…KRTH). C2H2-type zinc fingers lie at residues 327-351 (FPCP…KRTH), 357-381 (FKCE…MHVH), and 387-409 (YICK…MKVH). The interval 403-466 (RKHMKVHESQ…LPPNFNEWYV (64 aa)) is disordered. Over residues 411–427 (SQGSDSSPAASSGYESS) the composition is skewed to low complexity. Over residues 434 to 454 (SANSKDTTKTPSAVQTSTSHN) the composition is skewed to polar residues.

Belongs to the GLI C2H2-type zinc-finger protein family. Interacts with KPNA1 and KPNA6. Interacts (via C2H2-type domains 3, 4 and 5) with GLI3; the interaction enhances its transcriptional activity. Interacts (via the C2H2-type domains 3, 4 and 5) with MDFIC (via the C2H2-type domains 3, 4 and 5); the interaction reduces its transcriptional activity. CNS. A high level expression is seen in the cerebellum.

It is found in the nucleus. Its subcellular location is the cytoplasm. Acts as a transcriptional activator. Required in the earliest stages in both axial midline development and left-right (LR) asymmetry specification. Binds to the minimal GLI-consensus sequence 5'-GGGTGGTC-3'. The polypeptide is Zinc finger protein ZIC 3 (Zic3) (Mus musculus (Mouse)).